Here is a 38-residue protein sequence, read N- to C-terminus: Photosystem II reaction center protein L (38 aa).

Residues 17–37 (SLYWGLLLIFVLAVLFSNYSF) form a helical membrane-spanning segment.

It belongs to the PsbL family. PSII is composed of 1 copy each of membrane proteins PsbA, PsbB, PsbC, PsbD, PsbE, PsbF, PsbH, PsbI, PsbJ, PsbK, PsbL, PsbM, PsbT, PsbX, PsbY, PsbZ, Psb30/Ycf12, at least 3 peripheral proteins of the oxygen-evolving complex and a large number of cofactors. It forms dimeric complexes.

It localises to the plastid. The protein resides in the chloroplast thylakoid membrane. In terms of biological role, one of the components of the core complex of photosystem II (PSII). PSII is a light-driven water:plastoquinone oxidoreductase that uses light energy to abstract electrons from H(2)O, generating O(2) and a proton gradient subsequently used for ATP formation. It consists of a core antenna complex that captures photons, and an electron transfer chain that converts photonic excitation into a charge separation. This subunit is found at the monomer-monomer interface and is required for correct PSII assembly and/or dimerization. The chain is Photosystem II reaction center protein L from Bowenia serrulata (Byfield fern).